The following is a 67-amino-acid chain: Phycobilisome 7.8 kDa linker polypeptide, allophycocyanin-associated, core (67 aa).

The region spanning 1–56 is the CpcD-like domain; it reads MRMFRITACVPSQTRIRTQRELQNTYFTKLVPYDNSFREQQRIMKMGGKIVKVELA.

This sequence belongs to the phycobilisome linker protein family.

The protein localises to the cellular thylakoid membrane. Its function is as follows. Rod linker protein, associated with allophycocyanin. Linker polypeptides determine the state of aggregation and the location of the disk-shaped phycobiliprotein units within the phycobilisome and modulate their spectroscopic properties in order to mediate a directed and optimal energy transfer. This is Phycobilisome 7.8 kDa linker polypeptide, allophycocyanin-associated, core (apcC) from Synechocystis sp. (strain ATCC 27184 / PCC 6803 / Kazusa).